A 146-amino-acid chain; its full sequence is Ubiquitin-conjugating enzyme E2 variant 1D (146 aa).

The UBC core domain maps to 13–146 (PRNFRLLEEL…LVQPPEGTCF (134 aa)).

It belongs to the ubiquitin-conjugating enzyme family. In terms of assembly, heterodimer with UBC35 or UBC36. As to expression, expressed in roots, shoots, leaves, stems, flowers and pollen.

Has no ubiquitin ligase activity on its own. The heterodimer with UBC catalyzes the synthesis of non-canonical poly-ubiquitin chains that are linked through 'Lys-63'. This type of poly-ubiquitination does not lead to protein degradation by the proteasome. Mediates transcriptional activation of target genes. May play a role in the control of progress through the cell cycle and differentiation. Involved in the error-free DNA repair pathway and contributes to the survival of cells after DNA damage. This chain is Ubiquitin-conjugating enzyme E2 variant 1D (UEV1D), found in Arabidopsis thaliana (Mouse-ear cress).